A 116-amino-acid chain; its full sequence is Protein Rev (116 aa).

Phosphoserine; by host CK2 occurs at positions 5 and 8. The interval 18 to 26 is homomultimerization; the sequence is LIKLLYQSN. The disordered stretch occupies residues 21–49; it reads LLYQSNPPPNPEGTRQARRNRRRRWRERQ. A Nuclear localization signal and RNA-binding (RRE) motif is present at residues 34–50; it reads TRQARRNRRRRWRERQR. Residues 36-47 are compositionally biased toward basic residues; sequence QARRNRRRRWRE. The short motif at 73–84 is the Nuclear export signal and binding to XPO1 element; that stretch reads LQLPPLERLTLD. Serine 92 and serine 99 each carry phosphoserine; by host. The tract at residues 92-116 is disordered; that stretch reads SGTQGVGSPQILVESPTVLESGTKE.

Belongs to the HIV-1 REV protein family. Homomultimer; when bound to the RRE. Multimeric assembly is essential for activity and may involve XPO1. Binds to human KPNB1, XPO1, TNPO1, RANBP5 and IPO7. Interacts with the viral Integrase. Interacts with human KHDRBS1. Interacts with human NAP1; this interaction decreases Rev multimerization and stimulates its activity. Interacts with human DEAD-box helicases DDX3 and DDX24; these interactions may serve for viral RNA export to the cytoplasm and packaging, respectively. Interacts with human PSIP1; this interaction may inhibit HIV-1 DNA integration by promoting dissociation of the Integrase-LEDGF/p75 complex. Asymmetrically arginine dimethylated at one site by host PRMT6. Methylation impairs the RNA-binding activity and export of viral RNA from the nucleus to the cytoplasm. Post-translationally, phosphorylated by protein kinase CK2. Presence of, and maybe binding to the N-terminus of the regulatory beta subunit of CK2 is necessary for CK2-mediated Rev's phosphorylation.

The protein localises to the host nucleus. Its subcellular location is the host nucleolus. It is found in the host cytoplasm. Escorts unspliced or incompletely spliced viral pre-mRNAs (late transcripts) out of the nucleus of infected cells. These pre-mRNAs carry a recognition sequence called Rev responsive element (RRE) located in the env gene, that is not present in fully spliced viral mRNAs (early transcripts). This function is essential since most viral proteins are translated from unspliced or partially spliced pre-mRNAs which cannot exit the nucleus by the pathway used by fully processed cellular mRNAs. Rev itself is translated from a fully spliced mRNA that readily exits the nucleus. Rev's nuclear localization signal (NLS) binds directly to KPNB1/Importin beta-1 without previous binding to KPNA1/Importin alpha-1. KPNB1 binds to the GDP bound form of RAN (Ran-GDP) and targets Rev to the nucleus. In the nucleus, the conversion from Ran-GDP to Ran-GTP dissociates Rev from KPNB1 and allows Rev's binding to the RRE in viral pre-mRNAs. Rev multimerization on the RRE via cooperative assembly exposes its nuclear export signal (NES) to the surface. Rev can then form a complex with XPO1/CRM1 and Ran-GTP, leading to nuclear export of the complex. Conversion from Ran-GTP to Ran-GDP mediates dissociation of the Rev/RRE/XPO1/RAN complex, so that Rev can return to the nucleus for a subsequent round of export. Beside KPNB1, also seems to interact with TNPO1/Transportin-1, RANBP5/IPO5 and IPO7/RANBP7 for nuclear import. The nucleoporin-like HRB/RIP is an essential cofactor that probably indirectly interacts with Rev to release HIV RNAs from the perinuclear region to the cytoplasm. The sequence is that of Protein Rev from Homo sapiens (Human).